The sequence spans 685 residues: Kinesin-related protein 11 (685 aa).

Residues 4-405 form the Kinesin motor domain; sequence NISVSVRARP…LKFASRAKKI (402 aa). A disordered region spans residues 36 to 105; sequence TSLPPPITQP…TTVPASPAPT (70 aa). Positions 47 to 105 are enriched in low complexity; it reads SSLPPISTPIKSSSSSSTSTSAGSLKTPLKTPLKTPLKTPLKTNSTTTNTTVPASPAPT. 156-163 serves as a coordination point for ATP; it reads GITSSGKT. A coiled-coil region spans residues 411–488; the sequence is VNEILDDKAL…KINNLNKLIL (78 aa). A disordered region spans residues 495-568; it reads NSASKGGSGS…QSTSSLTIGG (74 aa). Residues 511 to 520 are compositionally biased toward polar residues; the sequence is RSTFVSPSQN. Over residues 533-565 the composition is skewed to low complexity; it reads PNSFSNLLLQSPSQNNNNNSHISPLSQSTSSLT. A coiled-coil region spans residues 574–683; it reads FESNELIQIQ…LKSKIQEYEV (110 aa).

Belongs to the TRAFAC class myosin-kinesin ATPase superfamily. Kinesin family.

The protein resides in the cytoplasm. It is found in the cytoskeleton. In terms of biological role, microtubule-associated force-producing protein that plays a role in organelle transport. Its motor activity is directed toward the microtubule's plus end. This Dictyostelium discoideum (Social amoeba) protein is Kinesin-related protein 11 (kif11).